A 523-amino-acid chain; its full sequence is 2-isopropylmalate synthase (523 aa).

In terms of domain architecture, Pyruvate carboxyltransferase spans 5–267 (VIIFDTTLRD…ETGINAKEIH (263 aa)). Residues D14, H202, H204, and N238 each contribute to the Mn(2+) site. The regulatory domain stretch occupies residues 392–523 (GLQQLVVHSD…KQARTELGGV (132 aa)).

Belongs to the alpha-IPM synthase/homocitrate synthase family. LeuA type 1 subfamily. As to quaternary structure, homodimer. Mn(2+) serves as cofactor.

It is found in the cytoplasm. It carries out the reaction 3-methyl-2-oxobutanoate + acetyl-CoA + H2O = (2S)-2-isopropylmalate + CoA + H(+). The protein operates within amino-acid biosynthesis; L-leucine biosynthesis; L-leucine from 3-methyl-2-oxobutanoate: step 1/4. In terms of biological role, catalyzes the condensation of the acetyl group of acetyl-CoA with 3-methyl-2-oxobutanoate (2-ketoisovalerate) to form 3-carboxy-3-hydroxy-4-methylpentanoate (2-isopropylmalate). This chain is 2-isopropylmalate synthase, found in Shewanella loihica (strain ATCC BAA-1088 / PV-4).